A 359-amino-acid polypeptide reads, in one-letter code: Nicotinate-nucleotide--dimethylbenzimidazole phosphoribosyltransferase (359 aa).

Catalysis depends on Glu-318, which acts as the Proton acceptor.

The protein belongs to the CobT family. Homodimer.

It carries out the reaction 5,6-dimethylbenzimidazole + nicotinate beta-D-ribonucleotide = alpha-ribazole 5'-phosphate + nicotinate + H(+). It participates in nucleoside biosynthesis; alpha-ribazole biosynthesis; alpha-ribazole from 5,6-dimethylbenzimidazole: step 1/2. Functionally, catalyzes the synthesis of alpha-ribazole-5'-phosphate from nicotinate mononucleotide (NAMN) and 5,6-dimethylbenzimidazole (DMB). The polypeptide is Nicotinate-nucleotide--dimethylbenzimidazole phosphoribosyltransferase (Shigella sonnei (strain Ss046)).